The sequence spans 308 residues: Methionyl-tRNA formyltransferase (308 aa).

107 to 110 (SLLP) contributes to the (6S)-5,6,7,8-tetrahydrofolate binding site.

This sequence belongs to the Fmt family.

The enzyme catalyses L-methionyl-tRNA(fMet) + (6R)-10-formyltetrahydrofolate = N-formyl-L-methionyl-tRNA(fMet) + (6S)-5,6,7,8-tetrahydrofolate + H(+). Functionally, attaches a formyl group to the free amino group of methionyl-tRNA(fMet). The formyl group appears to play a dual role in the initiator identity of N-formylmethionyl-tRNA by promoting its recognition by IF2 and preventing the misappropriation of this tRNA by the elongation apparatus. This is Methionyl-tRNA formyltransferase from Carboxydothermus hydrogenoformans (strain ATCC BAA-161 / DSM 6008 / Z-2901).